We begin with the raw amino-acid sequence, 45 residues long: Photosystem II reaction center protein K (45 aa).

Residues 1–8 constitute a propeptide that is removed on maturation; it reads MNSALFLA. A helical transmembrane segment spans residues 23 to 43; the sequence is ILPVIPVFFLLLAFVWQAAIG.

Belongs to the PsbK family. In terms of assembly, PSII is composed of 1 copy each of membrane proteins PsbA, PsbB, PsbC, PsbD, PsbE, PsbF, PsbH, PsbI, PsbJ, PsbK, PsbL, PsbM, PsbT, PsbX, PsbY, PsbZ, Psb30/Ycf12, at least 3 peripheral proteins of the oxygen-evolving complex and a large number of cofactors. It forms dimeric complexes.

The protein resides in the plastid. It is found in the chloroplast thylakoid membrane. One of the components of the core complex of photosystem II (PSII). PSII is a light-driven water:plastoquinone oxidoreductase that uses light energy to abstract electrons from H(2)O, generating O(2) and a proton gradient subsequently used for ATP formation. It consists of a core antenna complex that captures photons, and an electron transfer chain that converts photonic excitation into a charge separation. In Pyropia yezoensis (Susabi-nori), this protein is Photosystem II reaction center protein K.